Consider the following 270-residue polypeptide: UPF0246 protein PsycPRwf_0637 (270 aa).

The protein belongs to the UPF0246 family.

The polypeptide is UPF0246 protein PsycPRwf_0637 (Psychrobacter sp. (strain PRwf-1)).